Consider the following 267-residue polypeptide: Tryptophan synthase alpha chain (267 aa).

Catalysis depends on proton acceptor residues Glu47 and Asp58.

It belongs to the TrpA family. As to quaternary structure, tetramer of two alpha and two beta chains.

It carries out the reaction (1S,2R)-1-C-(indol-3-yl)glycerol 3-phosphate + L-serine = D-glyceraldehyde 3-phosphate + L-tryptophan + H2O. It participates in amino-acid biosynthesis; L-tryptophan biosynthesis; L-tryptophan from chorismate: step 5/5. Functionally, the alpha subunit is responsible for the aldol cleavage of indoleglycerol phosphate to indole and glyceraldehyde 3-phosphate. The protein is Tryptophan synthase alpha chain of Chlorobaculum parvum (strain DSM 263 / NCIMB 8327) (Chlorobium vibrioforme subsp. thiosulfatophilum).